The following is a 363-amino-acid chain: Phosphoserine aminotransferase (363 aa).

Residue Arg-42 participates in L-glutamate binding. Trp-105, Thr-155, Asp-175, and Gln-198 together coordinate pyridoxal 5'-phosphate. Lys-199 carries the N6-(pyridoxal phosphate)lysine modification. 240 to 241 (NT) provides a ligand contact to pyridoxal 5'-phosphate.

This sequence belongs to the class-V pyridoxal-phosphate-dependent aminotransferase family. SerC subfamily. Homodimer. It depends on pyridoxal 5'-phosphate as a cofactor.

Its subcellular location is the cytoplasm. The enzyme catalyses O-phospho-L-serine + 2-oxoglutarate = 3-phosphooxypyruvate + L-glutamate. The catalysed reaction is 4-(phosphooxy)-L-threonine + 2-oxoglutarate = (R)-3-hydroxy-2-oxo-4-phosphooxybutanoate + L-glutamate. It functions in the pathway amino-acid biosynthesis; L-serine biosynthesis; L-serine from 3-phospho-D-glycerate: step 2/3. The protein operates within cofactor biosynthesis; pyridoxine 5'-phosphate biosynthesis; pyridoxine 5'-phosphate from D-erythrose 4-phosphate: step 3/5. Functionally, catalyzes the reversible conversion of 3-phosphohydroxypyruvate to phosphoserine and of 3-hydroxy-2-oxo-4-phosphonooxybutanoate to phosphohydroxythreonine. The protein is Phosphoserine aminotransferase of Herminiimonas arsenicoxydans.